The chain runs to 354 residues: Uroporphyrinogen decarboxylase (354 aa).

Substrate contacts are provided by residues 27 to 31 (RQAGR), D77, Y154, T209, and H327.

The protein belongs to the uroporphyrinogen decarboxylase family. As to quaternary structure, homodimer.

The protein resides in the cytoplasm. It catalyses the reaction uroporphyrinogen III + 4 H(+) = coproporphyrinogen III + 4 CO2. Its pathway is porphyrin-containing compound metabolism; protoporphyrin-IX biosynthesis; coproporphyrinogen-III from 5-aminolevulinate: step 4/4. Functionally, catalyzes the decarboxylation of four acetate groups of uroporphyrinogen-III to yield coproporphyrinogen-III. In Salmonella newport (strain SL254), this protein is Uroporphyrinogen decarboxylase.